The following is a 195-amino-acid chain: Interferon tau (195 aa).

Residues 1-23 (MAFMLSLLMALVLVSYGLGGSLG) form the signal peptide. Intrachain disulfides connect cysteine 52/cysteine 162 and cysteine 87/cysteine 109.

Belongs to the alpha/beta interferon family. IFN-alphaII subfamily.

Its subcellular location is the secreted. Paracrine hormone primarily responsible for maternal recognition of pregnancy. Interacts with endometrial receptors, probably type I interferon receptors, and blocks estrogen receptor expression, preventing the estrogen-induced increase in oxytocin receptor expression in the endometrium. This results in the suppression of the pulsatile endometrial release of the luteolytic hormone prostaglandin F2-alpha, hindering the regression of the corpus luteum (luteolysis) and therefore a return to ovarian cyclicity. This, and a possible direct effect of IFN-tau on prostaglandin synthesis, leads in turn to continued ovarian progesterone secretion, which stimulates the secretion by the endometrium of the nutrients required for the growth of the conceptus. In summary, displays particularly high antiviral and antiproliferative potency concurrently with particular weak cytotoxicity, high antiluteolytic activity and immunomodulatory properties. In contrast with other IFNs, IFN-tau is not virally inducible. The protein is Interferon tau (IFNT) of Giraffa camelopardalis (Giraffe).